The following is an 87-amino-acid chain: UPF0250 protein ESA_02696 (87 aa).

This sequence belongs to the UPF0250 family.

The sequence is that of UPF0250 protein ESA_02696 from Cronobacter sakazakii (strain ATCC BAA-894) (Enterobacter sakazakii).